The chain runs to 150 residues: Large ribosomal subunit protein uL13 (150 aa).

It belongs to the universal ribosomal protein uL13 family. As to quaternary structure, part of the 50S ribosomal subunit.

This protein is one of the early assembly proteins of the 50S ribosomal subunit, although it is not seen to bind rRNA by itself. It is important during the early stages of 50S assembly. This Mesoplasma florum (strain ATCC 33453 / NBRC 100688 / NCTC 11704 / L1) (Acholeplasma florum) protein is Large ribosomal subunit protein uL13.